The sequence spans 461 residues: Photosystem II CP43 reaction center protein (461 aa).

Positions 1 to 2 (ME) are excised as a propeptide. An N-acetylthreonine modification is found at Thr3. Thr3 bears the Phosphothreonine mark. 5 consecutive transmembrane segments (helical) span residues 57 to 81 (LFEV…PHLA), 122 to 143 (LLGP…KDRN), 166 to 188 (KALY…RKIT), 243 to 263 (KPFA…LSYS), and 279 to 300 (WFNN…ASQA). Position 355 (Glu355) interacts with [CaMn4O5] cluster. The helical transmembrane segment at 435 to 459 (RARAAAAGFEKGIDRDLEPVLSMTP) threads the bilayer.

This sequence belongs to the PsbB/PsbC family. PsbC subfamily. PSII is composed of 1 copy each of membrane proteins PsbA, PsbB, PsbC, PsbD, PsbE, PsbF, PsbH, PsbI, PsbJ, PsbK, PsbL, PsbM, PsbT, PsbX, PsbY, PsbZ, Psb30/Ycf12, at least 3 peripheral proteins of the oxygen-evolving complex and a large number of cofactors. It forms dimeric complexes. It depends on Binds multiple chlorophylls and provides some of the ligands for the Ca-4Mn-5O cluster of the oxygen-evolving complex. It may also provide a ligand for a Cl- that is required for oxygen evolution. PSII binds additional chlorophylls, carotenoids and specific lipids. as a cofactor.

It is found in the plastid. The protein localises to the chloroplast thylakoid membrane. One of the components of the core complex of photosystem II (PSII). It binds chlorophyll and helps catalyze the primary light-induced photochemical processes of PSII. PSII is a light-driven water:plastoquinone oxidoreductase, using light energy to abstract electrons from H(2)O, generating O(2) and a proton gradient subsequently used for ATP formation. This chain is Photosystem II CP43 reaction center protein, found in Ceratophyllum demersum (Rigid hornwort).